The sequence spans 319 residues: Phosphoenolpyruvate transferase (319 aa).

Position 50 (Asp-50) interacts with 7,8-didemethyl-8-hydroxy-5-deazariboflavin.

The protein belongs to the CofD family. As to quaternary structure, homodimer. It depends on Mg(2+) as a cofactor.

It catalyses the reaction enolpyruvoyl-2-diphospho-5'-guanosine + 7,8-didemethyl-8-hydroxy-5-deazariboflavin = dehydro coenzyme F420-0 + GMP + H(+). It functions in the pathway cofactor biosynthesis; coenzyme F420 biosynthesis. Its function is as follows. Catalyzes the transfer of the phosphoenolpyruvate moiety from enoylpyruvoyl-2-diphospho-5'-guanosine (EPPG) to 7,8-didemethyl-8-hydroxy-5-deazariboflavin (FO) with the formation of dehydro coenzyme F420-0 and GMP. This is Phosphoenolpyruvate transferase from Streptomyces avermitilis (strain ATCC 31267 / DSM 46492 / JCM 5070 / NBRC 14893 / NCIMB 12804 / NRRL 8165 / MA-4680).